A 286-amino-acid chain; its full sequence is 2-hydroxy-6-oxo-6-phenylhexa-2,4-dienoate hydrolase (286 aa).

Substrate is bound by residues 42–43 (GG), Asn51, Asn111, Ser180, and Arg190. Catalysis depends on His265, which acts as the Proton acceptor. Trp266 is a substrate binding site.

Belongs to the AB hydrolase superfamily. BphD family. In terms of assembly, homodimer.

It catalyses the reaction 2,6-dioxo-6-phenylhexa-3-enoate + H2O = 2-oxopent-4-enoate + benzoate + H(+). The protein operates within xenobiotic degradation; biphenyl degradation; 2-hydroxy-2,4-pentadienoate and benzoate from biphenyl: step 4/4. Catalyzes an unusual C-C bond hydrolysis of 2-hydroxy-6-oxo-6-phenylhexa-2,4-dienoic acid (HOPDA) to produce benzoic acid and 2-hydroxy-2,4-pentadienoic acid (HPD). In Polaromonas naphthalenivorans (strain CJ2), this protein is 2-hydroxy-6-oxo-6-phenylhexa-2,4-dienoate hydrolase.